Reading from the N-terminus, the 303-residue chain is Short chain dehydrogenase pigC (303 aa).

NADP(+)-binding residues include isoleucine 45, aspartate 103, asparagine 130, arginine 164, tyrosine 196, lysine 200, and threonine 231. The active-site Proton donor is the tyrosine 196. Lysine 200 acts as the Lowers pKa of active site Tyr in catalysis.

Belongs to the short-chain dehydrogenases/reductases (SDR) family.

Its pathway is secondary metabolite biosynthesis. Short chain dehydrogenase; part of the gene cluster that mediates the biosynthesis of azaphilone pigments (MonAzPs), a complex mixture of compounds with a common azaphilone skeleton very widely used as food colorants. Within the pathway, pigC intercepts the very reactive benzaldehyde produced by the nrPKS pigA to reduce the omega-1 carbonyl to the alcohol to provide the first stable enzyme-free MonAzPs intermediate, 6-(4-hydroxy-2-oxopentyl)-3-methyl-2,4-dioxocyclohexane carbaldehyde, also known as M7PKS-1. The first step of the pathway is performed by the nrPKS pigA that forms the hexaketide precursor from successive condensations of five malonyl-CoA units, with a simple acetyl-CoA starter unit. The role of esterase pigG is not clear, but it may play at most a supplementary role in the formation of the benzaldehyde produced by the pigA nrPKS. This very reactive benzaldehyde is intercepted by the pigC ketoreductase that to provide the first stable enzyme-free MonAzPs intermediate, M7PKS-1. The FAD-dependent monooxygenase pigN hydroxylates M7PKS-1 at C-4, which triggers the formation of the pyran ring. PigJ, pigK and pigD are involved in the acetylation of the pyran ring. PigJ and pigK form the two subunits of a dedicated fungal FAS that produces the side chain fatty acyl moiety of MonAzPs and pigD transfers the fatty acyl chain to the C-4 alcohol. PigM and pigO are involved in the elimination of the omega-1 alcohol. PigM acts as an O-acetyltransferase that synthesizes the putative O-11 acetyl intermediate whereas pigO eliminates acetic acid to yield an intermediate with a C10(11) double bond. The dehydration of the C-11 alcohol followed by the reduction of the C6(7) double bond by the NAD(P)H-dependent oxidoreductase pigE increases the electrophilicity of the C-5 ketone of the resulting acyl benzopyran. This in turn sets up the C-5 ketone for an intramolecular Knoevenagel aldol condensation with the C-20 enol of the side chain. This condensation affords the characteristic linear tricyclic carbon skeletons of the yellow pigments that serve as the common precursors for the classical yellow pigments monascin and ankaflavin, orange pigments rubopunctatin and monascorubrin, and red pigments ribropunctamine and monascorubramine. The FAD-dependent oxidoreductase pigF is especially invoved in the biosynthesis of orange and red pigments via desaturation of C6(7). This Monascus ruber (Mold) protein is Short chain dehydrogenase pigC.